The sequence spans 548 residues: Chaperonin GroEL (548 aa).

ATP contacts are provided by residues Thr29–Pro32, Lys50, Asp86–Thr90, Gly416, and Asp497.

The protein belongs to the chaperonin (HSP60) family. As to quaternary structure, forms a cylinder of 14 subunits composed of two heptameric rings stacked back-to-back. Interacts with the co-chaperonin GroES.

The protein resides in the cytoplasm. It catalyses the reaction ATP + H2O + a folded polypeptide = ADP + phosphate + an unfolded polypeptide.. Functionally, together with its co-chaperonin GroES, plays an essential role in assisting protein folding. The GroEL-GroES system forms a nano-cage that allows encapsulation of the non-native substrate proteins and provides a physical environment optimized to promote and accelerate protein folding. In Neorickettsia risticii (Ehrlichia risticii), this protein is Chaperonin GroEL.